A 357-amino-acid polypeptide reads, in one-letter code: 3-isopropylmalate dehydrogenase (357 aa).

76–89 (GPQWDTIDPSLRPE) is an NAD(+) binding site. Arginine 96, arginine 106, arginine 134, and aspartate 224 together coordinate substrate. Positions 224, 248, and 252 each coordinate Mg(2+). 282-294 (GSAPDIAGKGIAN) contacts NAD(+).

It belongs to the isocitrate and isopropylmalate dehydrogenases family. LeuB type 1 subfamily. Homodimer. Mg(2+) serves as cofactor. The cofactor is Mn(2+).

The protein resides in the cytoplasm. The catalysed reaction is (2R,3S)-3-isopropylmalate + NAD(+) = 4-methyl-2-oxopentanoate + CO2 + NADH. Its pathway is amino-acid biosynthesis; L-leucine biosynthesis; L-leucine from 3-methyl-2-oxobutanoate: step 3/4. Its function is as follows. Catalyzes the oxidation of 3-carboxy-2-hydroxy-4-methylpentanoate (3-isopropylmalate) to 3-carboxy-4-methyl-2-oxopentanoate. The product decarboxylates to 4-methyl-2 oxopentanoate. The sequence is that of 3-isopropylmalate dehydrogenase from Xanthomonas oryzae pv. oryzae (strain MAFF 311018).